We begin with the raw amino-acid sequence, 454 residues long: Enolase (454 aa).

(2R)-2-phosphoglycerate is bound at residue Q167. The active-site Proton donor is the E209. Mg(2+) is bound by residues D250, E312, and D339. The (2R)-2-phosphoglycerate site is built by K364, R393, S394, and K415. Catalysis depends on K364, which acts as the Proton acceptor.

Belongs to the enolase family. Mg(2+) is required as a cofactor.

It localises to the cytoplasm. The protein localises to the secreted. The protein resides in the cell surface. The catalysed reaction is (2R)-2-phosphoglycerate = phosphoenolpyruvate + H2O. It participates in carbohydrate degradation; glycolysis; pyruvate from D-glyceraldehyde 3-phosphate: step 4/5. Its function is as follows. Catalyzes the reversible conversion of 2-phosphoglycerate (2-PG) into phosphoenolpyruvate (PEP). It is essential for the degradation of carbohydrates via glycolysis. This chain is Enolase, found in Mycoplasmopsis agalactiae (strain NCTC 10123 / CIP 59.7 / PG2) (Mycoplasma agalactiae).